A 266-amino-acid chain; its full sequence is GATA-type zinc finger protein 1 (266 aa).

Disordered stretches follow at residues 1–31 (MEAA…KSRP), 106–129 (TQCP…PRKQ), and 171–191 (CSQK…SSEA). A compositionally biased stretch (polar residues) spans 106–121 (TQCPNLEISSATSPAS). The segment at 197–221 (CASCRTQRTPLWRDAEDGTPLCNAC) adopts a GATA-type zinc-finger fold.

In terms of tissue distribution, specifically expressed in adult testis and ovary. Expressed at high levels in the somatic cells of the developing gonads, including Leydig cells in the testes and granulosa cells in the ovaries.

Its subcellular location is the nucleus. In terms of biological role, transcriptional regulator that plays a key role in germ cell development. Determines the oogenic fate by activating key genes for the oogenic program and meiotic prophase entry. Acts downstream of bone morphogenetic protein (BMP) by regulating expression of genes required for the oogenic programs, which are repressed by Polycomb activities in sexually uncommitted germ cells. Regulates expression of STRA8, a central downstream effector for the meiotic program. Acts independently of retinoic acid (RA). In males, not required for germ-cell sex determination, but required to allow the spermatogonia to efficiently accomplish the meiotic prophase. This Mus musculus (Mouse) protein is GATA-type zinc finger protein 1.